The following is a 399-amino-acid chain: Elongation factor Tu (399 aa).

In terms of domain architecture, tr-type G spans 10-209 (KPHVNIGTIG…EVDRYIPTPE (200 aa)). A G1 region spans residues 19–26 (GHVDHGKT). Position 19-26 (19-26 (GHVDHGKT)) interacts with GTP. Threonine 26 is a Mg(2+) binding site. The G2 stretch occupies residues 60–64 (GITIA). Positions 81–84 (DCPG) are G3. GTP contacts are provided by residues 81-85 (DCPGH) and 136-139 (NKED). The segment at 136–139 (NKED) is G4. The tract at residues 174 to 176 (SAL) is G5.

This sequence belongs to the TRAFAC class translation factor GTPase superfamily. Classic translation factor GTPase family. EF-Tu/EF-1A subfamily. In terms of assembly, monomer.

It localises to the cytoplasm. It catalyses the reaction GTP + H2O = GDP + phosphate + H(+). Functionally, GTP hydrolase that promotes the GTP-dependent binding of aminoacyl-tRNA to the A-site of ribosomes during protein biosynthesis. In Wolinella succinogenes (strain ATCC 29543 / DSM 1740 / CCUG 13145 / JCM 31913 / LMG 7466 / NCTC 11488 / FDC 602W) (Vibrio succinogenes), this protein is Elongation factor Tu.